Here is a 368-residue protein sequence, read N- to C-terminus: UDP-N-acetylenolpyruvoylglucosamine reductase (368 aa).

In terms of domain architecture, FAD-binding PCMH-type spans 32–199; it reads IGGKPRSAVR…LAIELQLLTD (168 aa). Arginine 177 is a catalytic residue. The Proton donor role is filled by serine 257. Glutamate 358 is an active-site residue.

This sequence belongs to the MurB family. FAD serves as cofactor.

Its subcellular location is the cytoplasm. It catalyses the reaction UDP-N-acetyl-alpha-D-muramate + NADP(+) = UDP-N-acetyl-3-O-(1-carboxyvinyl)-alpha-D-glucosamine + NADPH + H(+). It functions in the pathway cell wall biogenesis; peptidoglycan biosynthesis. Functionally, cell wall formation. The protein is UDP-N-acetylenolpyruvoylglucosamine reductase of Corynebacterium glutamicum (strain R).